The chain runs to 437 residues: Sodium/bile acid cotransporter 4 (437 aa).

Residues 1–103 are Extracellular-facing; the sequence is MDSLDNTTLL…PPFWDTPLNH (103 aa). N-linked (GlcNAc...) asparagine glycosylation is found at N6 and N20. Residues 15–79 are disordered; that stretch reads SLLPDNLTLS…SSSLTVGVAG (65 aa). Over residues 22 to 41 the composition is skewed to polar residues; it reads TLSPNAGSPSASTLSPLAVT. The span at 42–74 shows a compositional bias: low complexity; it reads SSPGPGLSLAPSPSIGFSPEATPTPEPTSSSLT. Residues 104 to 124 form a helical membrane-spanning segment; that stretch reads GLNVFVGAALCITMLGLGCTV. Residues 125 to 140 lie on the Cytoplasmic side of the membrane; sequence DVNHFGAHVRRPVGAL. Residues 141-161 traverse the membrane as a helical segment; sequence LAALCQFGFLPLLAFLLALIF. Topologically, residues 162–197 are extracellular; the sequence is KLDEVAAVAVLLCGCCPGGNLSNLMSLLVDGDMNLS. N-linked (GlcNAc...) asparagine glycosylation is found at N181 and N195. A helical membrane pass occupies residues 198–218; it reads IIMTISSTLLALVLMPLCLWI. Residues 219 to 233 lie on the Cytoplasmic side of the membrane; sequence YSRAWINTPLVQLLP. Residues 234 to 254 traverse the membrane as a helical segment; the sequence is LGAVTLTLCSTLIPIGLGVFI. The Extracellular portion of the chain corresponds to 255 to 267; it reads RYKYNRVADYIVK. A helical membrane pass occupies residues 268–288; the sequence is VSLWSLLVTLVVLFIMTGTML. Residues 289–291 lie on the Cytoplasmic side of the membrane; sequence GPE. The chain crosses the membrane as a helical span at residues 292–312; sequence LLASIPATVYVVAIFMPLAGY. The Extracellular portion of the chain corresponds to 313 to 360; it reads ASGYGLATLFHLPPNCKRTVCLETGSQNVQLCTAILKLAFPPRFIGSM. Residues 361–381 form a helical membrane-spanning segment; that stretch reads YMFPLLYALFQSAEAGVFVLI. The Cytoplasmic segment spans residues 382-437; it reads YKMYGSEILHKREALDEDEDTDISYKKLKEEEMADTSYGTVGTDDLVMMETTQTAL.

This sequence belongs to the bile acid:sodium symporter (BASS) (TC 2.A.28) family. Activated following N-terminal proteolytic cleavage by thrombin and/or proteases. In terms of tissue distribution, highest expression in the brain and significantly above background levels in the eye, prostate, and whole embryo tissue preparations.

The protein localises to the cell membrane. Its function is as follows. Transporter for bile acids. This chain is Sodium/bile acid cotransporter 4 (Slc10a4), found in Mus musculus (Mouse).